Here is a 157-residue protein sequence, read N- to C-terminus: Ribosomal RNA large subunit methyltransferase H (157 aa).

S-adenosyl-L-methionine contacts are provided by residues Leu-73, Gly-105, and 124–129; that span reads LSKMTF.

Belongs to the RNA methyltransferase RlmH family. Homodimer.

It is found in the cytoplasm. It carries out the reaction pseudouridine(1915) in 23S rRNA + S-adenosyl-L-methionine = N(3)-methylpseudouridine(1915) in 23S rRNA + S-adenosyl-L-homocysteine + H(+). Functionally, specifically methylates the pseudouridine at position 1915 (m3Psi1915) in 23S rRNA. The polypeptide is Ribosomal RNA large subunit methyltransferase H (Christiangramia forsetii (strain DSM 17595 / CGMCC 1.15422 / KT0803) (Gramella forsetii)).